Here is a 158-residue protein sequence, read N- to C-terminus: Mitotic-spindle organizing protein 2B (158 aa).

Residue S34 is modified to Phosphoserine. The segment at 84-158 (RLASEPQDPA…PGKSPTRGST (75 aa)) is disordered. Residues 111 to 122 (GSAALGGALALA) are compositionally biased toward low complexity. Over residues 128-140 (EGSSQRMPRQPSA) the composition is skewed to polar residues. S152 is subject to Phosphoserine.

The protein belongs to the MOZART2 family. In terms of assembly, associates with the gamma-tubulin ring complex (gTuRC) consisting of TUBGCP2, TUBGCP3, TUBGCP4, TUBGCP5 and TUBGCP6 and gamma-tubulin TUBG1 or TUBG2; within the complex, interacts with TUBGCP2; the interaction plays a role in gTuRC activation. Interacts with TUBG1.

It localises to the cytoplasm. The protein resides in the cytoskeleton. The protein localises to the microtubule organizing center. Its subcellular location is the centrosome. It is found in the spindle. Functionally, required for the recruitment and the assembly of the gamma-tubulin ring complex (gTuRC) at the centrosome. The gTuRC regulates the minus-end nucleation of alpha-beta tubulin heterodimers that grow into microtubule protafilaments, a critical step in centrosome duplication and spindle formation. The polypeptide is Mitotic-spindle organizing protein 2B (MZT2B) (Homo sapiens (Human)).